The primary structure comprises 401 residues: Succinyl-diaminopimelate desuccinylase (401 aa).

His-71 contributes to the Zn(2+) binding site. Residue Asp-73 is part of the active site. Asp-104 contributes to the Zn(2+) binding site. Glu-138 acts as the Proton acceptor in catalysis. Residues Glu-139, Glu-167, and His-352 each coordinate Zn(2+).

This sequence belongs to the peptidase M20A family. DapE subfamily. As to quaternary structure, homodimer. It depends on Zn(2+) as a cofactor. Requires Co(2+) as cofactor.

It catalyses the reaction N-succinyl-(2S,6S)-2,6-diaminopimelate + H2O = (2S,6S)-2,6-diaminopimelate + succinate. It participates in amino-acid biosynthesis; L-lysine biosynthesis via DAP pathway; LL-2,6-diaminopimelate from (S)-tetrahydrodipicolinate (succinylase route): step 3/3. In terms of biological role, catalyzes the hydrolysis of N-succinyl-L,L-diaminopimelic acid (SDAP), forming succinate and LL-2,6-diaminopimelate (DAP), an intermediate involved in the bacterial biosynthesis of lysine and meso-diaminopimelic acid, an essential component of bacterial cell walls. The protein is Succinyl-diaminopimelate desuccinylase of Wolbachia sp. subsp. Brugia malayi (strain TRS).